The following is a 446-amino-acid chain: Phosphoglucosamine mutase (446 aa).

The Phosphoserine intermediate role is filled by Ser-103. Mg(2+) contacts are provided by Ser-103, Asp-242, Asp-244, and Asp-246. Ser-103 carries the post-translational modification Phosphoserine.

Belongs to the phosphohexose mutase family. Requires Mg(2+) as cofactor. Post-translationally, activated by phosphorylation.

The catalysed reaction is alpha-D-glucosamine 1-phosphate = D-glucosamine 6-phosphate. In terms of biological role, catalyzes the conversion of glucosamine-6-phosphate to glucosamine-1-phosphate. The chain is Phosphoglucosamine mutase from Vibrio cholerae serotype O1 (strain ATCC 39315 / El Tor Inaba N16961).